A 449-amino-acid polypeptide reads, in one-letter code: Kynurenine 3-monooxygenase (449 aa).

Belongs to the aromatic-ring hydroxylase family. KMO subfamily. The cofactor is FAD.

The catalysed reaction is L-kynurenine + NADPH + O2 + H(+) = 3-hydroxy-L-kynurenine + NADP(+) + H2O. It functions in the pathway cofactor biosynthesis; NAD(+) biosynthesis; quinolinate from L-kynurenine: step 1/3. In terms of biological role, catalyzes the hydroxylation of L-kynurenine (L-Kyn) to form 3-hydroxy-L-kynurenine (L-3OHKyn). Required for synthesis of quinolinic acid. The protein is Kynurenine 3-monooxygenase of Legionella pneumophila (strain Corby).